A 584-amino-acid chain; its full sequence is Putative poly(A) polymerase catalytic subunit (584 aa).

Basic and acidic residues predominate over residues 522–531 (EAEISEKEET). Residues 522–584 (EAEISEKEET…ENSLDSLTSD (63 aa)) are disordered. Residues 546–569 (SPNSSPNSSPNNSLNNSIDISTNN) are compositionally biased toward low complexity.

It belongs to the poxviridae poly(A) polymerase catalytic subunit family. Highly divergent.

It localises to the virion. The catalysed reaction is RNA(n) + ATP = RNA(n)-3'-adenine ribonucleotide + diphosphate. Functionally, polymerase that creates the 3'-poly(A) tail of mRNA's. The chain is Putative poly(A) polymerase catalytic subunit from Acanthamoeba polyphaga (Amoeba).